A 61-amino-acid chain; its full sequence is Small ribosomal subunit protein uS14 (61 aa).

Residues Cys24, Cys27, Cys40, and Cys43 each contribute to the Zn(2+) site.

The protein belongs to the universal ribosomal protein uS14 family. Zinc-binding uS14 subfamily. Part of the 30S ribosomal subunit. Contacts proteins S3 and S10. It depends on Zn(2+) as a cofactor.

In terms of biological role, binds 16S rRNA, required for the assembly of 30S particles and may also be responsible for determining the conformation of the 16S rRNA at the A site. The sequence is that of Small ribosomal subunit protein uS14 from Clostridium botulinum (strain Alaska E43 / Type E3).